The following is a 112-amino-acid chain: UPF0102 protein CFF8240_0294 (112 aa).

Belongs to the UPF0102 family.

The protein is UPF0102 protein CFF8240_0294 of Campylobacter fetus subsp. fetus (strain 82-40).